Reading from the N-terminus, the 279-residue chain is Pantothenate synthetase (279 aa).

26 to 33 (MGGLHEGH) is a binding site for ATP. H33 acts as the Proton donor in catalysis. Q57 contacts (R)-pantoate. Q57 contacts beta-alanine. 143-146 (GKKD) contributes to the ATP binding site. Q149 contacts (R)-pantoate. Residues V172 and 180–183 (LSSR) contribute to the ATP site.

This sequence belongs to the pantothenate synthetase family. In terms of assembly, homodimer.

It is found in the cytoplasm. The catalysed reaction is (R)-pantoate + beta-alanine + ATP = (R)-pantothenate + AMP + diphosphate + H(+). The protein operates within cofactor biosynthesis; (R)-pantothenate biosynthesis; (R)-pantothenate from (R)-pantoate and beta-alanine: step 1/1. Its function is as follows. Catalyzes the condensation of pantoate with beta-alanine in an ATP-dependent reaction via a pantoyl-adenylate intermediate. The polypeptide is Pantothenate synthetase (Nitrosospira multiformis (strain ATCC 25196 / NCIMB 11849 / C 71)).